Here is a 257-residue protein sequence, read N- to C-terminus: Uracil phosphoribosyltransferase (257 aa).

5-phospho-alpha-D-ribose 1-diphosphate-binding positions include Arg77, Arg102, and 129–137 (DPMLATGGS). Uracil-binding positions include Ile192 and 197–199 (GDA). Asp198 is a binding site for 5-phospho-alpha-D-ribose 1-diphosphate. The interval 203 to 257 (QFGPNLFTSSAPSRPEAPAGRGRAAAKTPGRRSARSESPSSTSPSARSRKAAPPA) is disordered. Composition is skewed to low complexity over residues 211-230 (SSAP…AAKT) and 238-248 (SESPSSTSPSA).

The protein belongs to the UPRTase family. Mg(2+) serves as cofactor.

It carries out the reaction UMP + diphosphate = 5-phospho-alpha-D-ribose 1-diphosphate + uracil. It functions in the pathway pyrimidine metabolism; UMP biosynthesis via salvage pathway; UMP from uracil: step 1/1. Its activity is regulated as follows. Allosterically activated by GTP. Its function is as follows. Catalyzes the conversion of uracil and 5-phospho-alpha-D-ribose 1-diphosphate (PRPP) to UMP and diphosphate. The chain is Uracil phosphoribosyltransferase from Mycolicibacterium paratuberculosis (strain ATCC BAA-968 / K-10) (Mycobacterium paratuberculosis).